A 408-amino-acid chain; its full sequence is GTPase Obg (408 aa).

Residues 1–159 enclose the Obg domain; it reads MKFVDEVSIR…RDLKMEMKVL (159 aa). The interval 127–150 is disordered; it reads NTRFKSSTNRAPRQTTPGKPGDQR. Positions 129 to 143 are enriched in polar residues; sequence RFKSSTNRAPRQTTP. One can recognise an OBG-type G domain in the interval 160–333; that stretch reads ADVGLLGLPN…LSHDLMRYLE (174 aa). GTP is bound by residues 166-173, 191-195, 213-216, 283-286, and 314-316; these read GLPNAGKS, FTTLV, DIPG, NKSD, and SAI. Serine 173 and threonine 193 together coordinate Mg(2+). A disordered region spans residues 382–408; it reads HDIGDDDGWDDDFEDDEDGPEIIYVRD. The span at 385–401 shows a compositional bias: acidic residues; that stretch reads GDDDGWDDDFEDDEDGP.

Belongs to the TRAFAC class OBG-HflX-like GTPase superfamily. OBG GTPase family. Monomer. Requires Mg(2+) as cofactor.

It localises to the cytoplasm. Its function is as follows. An essential GTPase which binds GTP, GDP and possibly (p)ppGpp with moderate affinity, with high nucleotide exchange rates and a fairly low GTP hydrolysis rate. Plays a role in control of the cell cycle, stress response, ribosome biogenesis and in those bacteria that undergo differentiation, in morphogenesis control. The chain is GTPase Obg from Pseudomonas putida (strain GB-1).